Reading from the N-terminus, the 320-residue chain is Aspartate carbamoyltransferase catalytic subunit (320 aa).

Carbamoyl phosphate-binding residues include arginine 68 and threonine 69. L-aspartate is bound at residue lysine 96. Residues arginine 118, histidine 148, and glutamine 151 each contribute to the carbamoyl phosphate site. The L-aspartate site is built by arginine 181 and arginine 236. Residues glycine 277 and proline 278 each contribute to the carbamoyl phosphate site.

This sequence belongs to the aspartate/ornithine carbamoyltransferase superfamily. ATCase family. In terms of assembly, heterododecamer (2C3:3R2) of six catalytic PyrB chains organized as two trimers (C3), and six regulatory PyrI chains organized as three dimers (R2).

The enzyme catalyses carbamoyl phosphate + L-aspartate = N-carbamoyl-L-aspartate + phosphate + H(+). It participates in pyrimidine metabolism; UMP biosynthesis via de novo pathway; (S)-dihydroorotate from bicarbonate: step 2/3. In terms of biological role, catalyzes the condensation of carbamoyl phosphate and aspartate to form carbamoyl aspartate and inorganic phosphate, the committed step in the de novo pyrimidine nucleotide biosynthesis pathway. The chain is Aspartate carbamoyltransferase catalytic subunit from Delftia acidovorans (strain DSM 14801 / SPH-1).